The following is a 554-amino-acid chain: Laccase-8 (554 aa).

An N-terminal signal peptide occupies residues 1-21 (MASAAMLVPLVLVLCTAAASA). 2 Plastocyanin-like domains span residues 29–145 (KVGG…PRNG) and 156–309 (EEIP…YKGV). The Cu cation site is built by His-79 and His-81. Residues Asn-107 and Asn-113 are each glycosylated (N-linked (GlcNAc...) asparagine). His-124 and His-126 together coordinate Cu cation. N-linked (GlcNAc...) asparagine glycosylation is found at Asn-271 and Asn-369. Positions 411–537 (DFPDFPPPMQ…AMVFEVLNGP (127 aa)) constitute a Plastocyanin-like 3 domain. Cu cation-binding residues include His-455, His-458, His-460, His-516, Cys-517, His-518, and His-522.

This sequence belongs to the multicopper oxidase family. Cu cation is required as a cofactor.

It is found in the secreted. The protein localises to the extracellular space. Its subcellular location is the apoplast. The enzyme catalyses 4 hydroquinone + O2 = 4 benzosemiquinone + 2 H2O. Its function is as follows. Lignin degradation and detoxification of lignin-derived products. This is Laccase-8 (LAC8) from Oryza sativa subsp. japonica (Rice).